The sequence spans 172 residues: Large ribosomal subunit protein uL10 (172 aa).

The protein belongs to the universal ribosomal protein uL10 family. In terms of assembly, part of the ribosomal stalk of the 50S ribosomal subunit. The N-terminus interacts with L11 and the large rRNA to form the base of the stalk. The C-terminus forms an elongated spine to which L12 dimers bind in a sequential fashion forming a multimeric L10(L12)X complex.

Its function is as follows. Forms part of the ribosomal stalk, playing a central role in the interaction of the ribosome with GTP-bound translation factors. This chain is Large ribosomal subunit protein uL10, found in Afipia carboxidovorans (strain ATCC 49405 / DSM 1227 / KCTC 32145 / OM5) (Oligotropha carboxidovorans).